We begin with the raw amino-acid sequence, 351 residues long: N-acetyl-gamma-glutamyl-phosphate reductase (351 aa).

The active site involves Cys154.

Belongs to the NAGSA dehydrogenase family. Type 1 subfamily.

The protein resides in the cytoplasm. The catalysed reaction is N-acetyl-L-glutamate 5-semialdehyde + phosphate + NADP(+) = N-acetyl-L-glutamyl 5-phosphate + NADPH + H(+). It participates in amino-acid biosynthesis; L-arginine biosynthesis; N(2)-acetyl-L-ornithine from L-glutamate: step 3/4. Its function is as follows. Catalyzes the NADPH-dependent reduction of N-acetyl-5-glutamyl phosphate to yield N-acetyl-L-glutamate 5-semialdehyde. The sequence is that of N-acetyl-gamma-glutamyl-phosphate reductase from Prochlorococcus marinus (strain MIT 9312).